The following is a 78-amino-acid chain: Small ribosomal subunit protein bS20 (78 aa).

Positions 55 to 78 are disordered; that stretch reads KSKGLIHKNKASRDKARLASKLAK.

This sequence belongs to the bacterial ribosomal protein bS20 family.

Functionally, binds directly to 16S ribosomal RNA. The sequence is that of Small ribosomal subunit protein bS20 from Streptococcus mutans serotype c (strain ATCC 700610 / UA159).